We begin with the raw amino-acid sequence, 378 residues long: Heat-inducible transcription repressor HrcA (378 aa).

Belongs to the HrcA family.

In terms of biological role, negative regulator of class I heat shock genes (grpE-dnaK-dnaJ and groELS operons). Prevents heat-shock induction of these operons. This Synechocystis sp. (strain ATCC 27184 / PCC 6803 / Kazusa) protein is Heat-inducible transcription repressor HrcA.